Consider the following 335-residue polypeptide: Holliday junction branch migration complex subunit RuvB (335 aa).

A large ATPase domain (RuvB-L) region spans residues 4–184 (ADRLVSAEVL…FGIVQRLEFY (181 aa)). ATP is bound by residues Ile-23, Arg-24, Gly-65, Lys-68, Thr-69, Thr-70, 131–133 (EDY), Arg-174, Tyr-184, and Arg-221. Thr-69 lines the Mg(2+) pocket. Residues 185–255 (NVDDLQSIVS…IATRALDMLS (71 aa)) form a small ATPAse domain (RuvB-S) region. The tract at residues 258 to 335 (AAGFDYLDRK…RHFGMVRNQE (78 aa)) is head domain (RuvB-H). Residues Arg-294, Arg-313, and Arg-318 each contribute to the DNA site.

The protein belongs to the RuvB family. In terms of assembly, homohexamer. Forms an RuvA(8)-RuvB(12)-Holliday junction (HJ) complex. HJ DNA is sandwiched between 2 RuvA tetramers; dsDNA enters through RuvA and exits via RuvB. An RuvB hexamer assembles on each DNA strand where it exits the tetramer. Each RuvB hexamer is contacted by two RuvA subunits (via domain III) on 2 adjacent RuvB subunits; this complex drives branch migration. In the full resolvosome a probable DNA-RuvA(4)-RuvB(12)-RuvC(2) complex forms which resolves the HJ.

It is found in the cytoplasm. The catalysed reaction is ATP + H2O = ADP + phosphate + H(+). Functionally, the RuvA-RuvB-RuvC complex processes Holliday junction (HJ) DNA during genetic recombination and DNA repair, while the RuvA-RuvB complex plays an important role in the rescue of blocked DNA replication forks via replication fork reversal (RFR). RuvA specifically binds to HJ cruciform DNA, conferring on it an open structure. The RuvB hexamer acts as an ATP-dependent pump, pulling dsDNA into and through the RuvAB complex. RuvB forms 2 homohexamers on either side of HJ DNA bound by 1 or 2 RuvA tetramers; 4 subunits per hexamer contact DNA at a time. Coordinated motions by a converter formed by DNA-disengaged RuvB subunits stimulates ATP hydrolysis and nucleotide exchange. Immobilization of the converter enables RuvB to convert the ATP-contained energy into a lever motion, pulling 2 nucleotides of DNA out of the RuvA tetramer per ATP hydrolyzed, thus driving DNA branch migration. The RuvB motors rotate together with the DNA substrate, which together with the progressing nucleotide cycle form the mechanistic basis for DNA recombination by continuous HJ branch migration. Branch migration allows RuvC to scan DNA until it finds its consensus sequence, where it cleaves and resolves cruciform DNA. The polypeptide is Holliday junction branch migration complex subunit RuvB (Photorhabdus laumondii subsp. laumondii (strain DSM 15139 / CIP 105565 / TT01) (Photorhabdus luminescens subsp. laumondii)).